The primary structure comprises 229 residues: Putative N-acetylmannosamine-6-phosphate 2-epimerase (229 aa).

Belongs to the NanE family.

The enzyme catalyses an N-acyl-D-glucosamine 6-phosphate = an N-acyl-D-mannosamine 6-phosphate. The protein operates within amino-sugar metabolism; N-acetylneuraminate degradation; D-fructose 6-phosphate from N-acetylneuraminate: step 3/5. In terms of biological role, converts N-acetylmannosamine-6-phosphate (ManNAc-6-P) to N-acetylglucosamine-6-phosphate (GlcNAc-6-P). The polypeptide is Putative N-acetylmannosamine-6-phosphate 2-epimerase (Shigella dysenteriae serotype 1 (strain Sd197)).